The following is a 193-amino-acid chain: ATP-dependent protease subunit HslV (193 aa).

The active site involves Thr12. 3 residues coordinate Na(+): Ala167, Cys170, and Thr173.

This sequence belongs to the peptidase T1B family. HslV subfamily. A double ring-shaped homohexamer of HslV is capped on each side by a ring-shaped HslU homohexamer. The assembly of the HslU/HslV complex is dependent on binding of ATP.

It localises to the cytoplasm. The enzyme catalyses ATP-dependent cleavage of peptide bonds with broad specificity.. With respect to regulation, allosterically activated by HslU binding. Its function is as follows. Protease subunit of a proteasome-like degradation complex believed to be a general protein degrading machinery. The chain is ATP-dependent protease subunit HslV from Bartonella henselae (strain ATCC 49882 / DSM 28221 / CCUG 30454 / Houston 1) (Rochalimaea henselae).